Consider the following 325-residue polypeptide: Lipid droplet-associated hydrolase (325 aa).

Catalysis depends on Ser-139, which acts as the Nucleophile. Residues Asp-271 and His-300 each act as charge relay system in the active site.

Belongs to the AB hydrolase superfamily. LDAH family.

The protein localises to the lipid droplet. It localises to the endoplasmic reticulum. The catalysed reaction is a cholesterol ester + H2O = cholesterol + a fatty acid + H(+). Probable serine lipid hydrolase associated with lipid droplets. Has low cholesterol esterase activity. Appears to lack triglyceride lipase activity. Involved in cholesterol and triglyceride homeostasis; stimulates cellular triglyceride accumulation and cellular cholesterol release. Acts antagonistically with PNPLA2/ATGL in regulation of cellular lipid stores. May regulate triglyceride accumulation indirectly through stimulation of PNPLA2/ATGL ubiquitination and proteasomal degradation. Promotes microtubule-dependent lipid droplet fusion. Highly expressed in macrophage-rich areas in atherosclerotic lesions, suggesting that it could promote cholesterol ester turnover in macrophages. The polypeptide is Lipid droplet-associated hydrolase (Rattus norvegicus (Rat)).